The sequence spans 313 residues: Iron-sulfur protein required for NADH dehydrogenase, mitochondrial (313 aa).

The transit peptide at 1 to 22 (MATVALLRSLRRRELHAAHISA) directs the protein to the mitochondrion. Residue 51 to 58 (GKGGVGKS) coordinates ATP.

It belongs to the Mrp/NBP35 ATP-binding proteins family. The cofactor is [4Fe-4S] cluster.

The protein localises to the mitochondrion matrix. In terms of biological role, essential during early vegetative growth. Required for the assembly of the mitochondrial membrane respiratory chain NADH dehydrogenase (Complex I). Involved in mitochondrial translation activity. May deliver of one or more Fe-S clusters to complex I subunits. This is Iron-sulfur protein required for NADH dehydrogenase, mitochondrial from Arabidopsis thaliana (Mouse-ear cress).